Consider the following 360-residue polypeptide: GDSL esterase/lipase At2g31550 (360 aa).

Positions 1-27 (MSTSKAITLTLFITTTLLASCDAAANA) are cleaved as a signal peptide. The N-linked (GlcNAc...) asparagine glycan is linked to Asn-26. Ser-42 (nucleophile) is an active-site residue. Asn-104 and Asn-326 each carry an N-linked (GlcNAc...) asparagine glycan. Catalysis depends on residues Asp-334 and His-337.

The protein belongs to the 'GDSL' lipolytic enzyme family.

It is found in the secreted. The sequence is that of GDSL esterase/lipase At2g31550 from Arabidopsis thaliana (Mouse-ear cress).